We begin with the raw amino-acid sequence, 171 residues long: Adenine phosphoribosyltransferase (171 aa).

The protein belongs to the purine/pyrimidine phosphoribosyltransferase family. As to quaternary structure, homodimer.

The protein localises to the cytoplasm. The enzyme catalyses AMP + diphosphate = 5-phospho-alpha-D-ribose 1-diphosphate + adenine. It functions in the pathway purine metabolism; AMP biosynthesis via salvage pathway; AMP from adenine: step 1/1. Its function is as follows. Catalyzes a salvage reaction resulting in the formation of AMP, that is energically less costly than de novo synthesis. This is Adenine phosphoribosyltransferase from Geobacter metallireducens (strain ATCC 53774 / DSM 7210 / GS-15).